Here is a 1001-residue protein sequence, read N- to C-terminus: 2-oxoglutarate dehydrogenase E1 component (1001 aa).

The protein belongs to the alpha-ketoglutarate dehydrogenase family. In terms of assembly, homodimer. Part of the 2-oxoglutarate dehydrogenase (OGDH) complex composed of E1 (2-oxoglutarate dehydrogenase), E2 (dihydrolipoamide succinyltransferase) and E3 (dihydrolipoamide dehydrogenase); the complex contains multiple copies of the three enzymatic components (E1, E2 and E3). Thiamine diphosphate serves as cofactor.

The catalysed reaction is N(6)-[(R)-lipoyl]-L-lysyl-[protein] + 2-oxoglutarate + H(+) = N(6)-[(R)-S(8)-succinyldihydrolipoyl]-L-lysyl-[protein] + CO2. Its function is as follows. E1 component of the 2-oxoglutarate dehydrogenase (OGDH) complex which catalyzes the decarboxylation of 2-oxoglutarate, the first step in the conversion of 2-oxoglutarate to succinyl-CoA and CO(2). This chain is 2-oxoglutarate dehydrogenase E1 component, found in Brucella anthropi (strain ATCC 49188 / DSM 6882 / CCUG 24695 / JCM 21032 / LMG 3331 / NBRC 15819 / NCTC 12168 / Alc 37) (Ochrobactrum anthropi).